The sequence spans 396 residues: 3-amino-4-hydroxybenzoate 2-monooxygenase PtnB3 (396 aa).

Residues alanine 19, 38 to 39, and arginine 112 each bind FAD; that span reads EQ. The Proton acceptor role is filled by tyrosine 217. FAD is bound at residue aspartate 295.

Belongs to the 6-hydroxynicotinate 3-monooxygenase family. It depends on FAD as a cofactor.

It carries out the reaction 3-amino-4-hydroxybenzoate + NADPH + O2 + H(+) = 3-amino-2,4-dihydroxybenzoate + NADP(+) + H2O. It participates in antibiotic biosynthesis. Part of a gene cluster involved in the biosynthesis of thioplatencin (ThioPTN) and platencin (PTN), potent and selective inhibitors of bacterial and mammalian fatty acid synthases. Catalyzes the hydroxylation of 3-amino-4-hydroxybenzoate (3,4-AHBA) to 3-amino-2,4-dihydroxybenzoate (3,2,4-ADHBA). The polypeptide is 3-amino-4-hydroxybenzoate 2-monooxygenase PtnB3 (Streptomyces platensis).